A 430-amino-acid polypeptide reads, in one-letter code: Glutamate-1-semialdehyde 2,1-aminomutase (430 aa).

Lys265 carries the post-translational modification N6-(pyridoxal phosphate)lysine.

The protein belongs to the class-III pyridoxal-phosphate-dependent aminotransferase family. HemL subfamily. Homodimer. It depends on pyridoxal 5'-phosphate as a cofactor.

Its subcellular location is the cytoplasm. The catalysed reaction is (S)-4-amino-5-oxopentanoate = 5-aminolevulinate. It participates in porphyrin-containing compound metabolism; protoporphyrin-IX biosynthesis; 5-aminolevulinate from L-glutamyl-tRNA(Glu): step 2/2. In Shewanella oneidensis (strain ATCC 700550 / JCM 31522 / CIP 106686 / LMG 19005 / NCIMB 14063 / MR-1), this protein is Glutamate-1-semialdehyde 2,1-aminomutase.